Reading from the N-terminus, the 400-residue chain is MARASAAAPLPRRPARPRAPSSSYRPVRPCIDPSVMLNALPDPVLVVDGSGDIRYVNLEAQEFFGLSAAMMEGMPLAELLPPNSPVSQLIEQVQQGRHRASQEGVVIDTPRIGPHHVTVRVTALGEPADHVLLTVNERTLARKIDNSLTHRNAARSVTAMASMLGHEVKNPLSGIRGAAQLLEENCSESDRVLTRLICDEADRIVALVNRMEVFSDQRPLERDAVNIHTVLEHVRKVAQSGFARNIRFIERYDPSLPPVYGNRDQLIQIFLNLIKNAAEAAPESGGEIILSTSYQHGVRMALPGGDTRLHLPLLVSVQDNGDGIPDDLRSNLFDAFITTKVNGTGLGLALVAKIVGDHGGVIEFDSQPRRTVFKVSLPMFDEAQMSGDPAPARGIRGAIG.

Low complexity-rich tracts occupy residues methionine 1 to leucine 10 and arginine 18 to valine 27. A disordered region spans residues methionine 1–valine 27. A PAS domain is found at proline 29 to arginine 99. The Histidine kinase domain maps to methionine 163–aspartate 381. A Phosphohistidine; by autocatalysis modification is found at histidine 166.

Autophosphorylated.

It localises to the cytoplasm. It catalyses the reaction ATP + protein L-histidine = ADP + protein N-phospho-L-histidine.. Member of the two-component regulatory system NtrB/NtrC, which controls expression of the nitrogen-regulated (ntr) genes in response to nitrogen limitation. Under conditions of nitrogen limitation, NtrB autophosphorylates and transfers the phosphoryl group to NtrC. In the presence of nitrogen, acts as a phosphatase that dephosphorylates and inactivates NtrC. The polypeptide is Sensory histidine kinase/phosphatase NtrB (Azospirillum brasilense).